We begin with the raw amino-acid sequence, 187 residues long: Dihydrofolate reductase 2, mitochondrial (187 aa).

In terms of domain architecture, DHFR spans L4 to K185. NADP(+) is bound by residues A10 and G16–D22. Residue E31–Q36 participates in substrate binding. NADP(+) is bound at residue R55–T57. R71 is a substrate binding site. NADP(+)-binding positions include S77 to E79 and G117 to E124.

Belongs to the dihydrofolate reductase family. In terms of tissue distribution, expressed in numerous cell lines.

It is found in the mitochondrion. The protein localises to the mitochondrion matrix. It localises to the mitochondrion inner membrane. The enzyme catalyses (6S)-5,6,7,8-tetrahydrofolate + NADP(+) = 7,8-dihydrofolate + NADPH + H(+). Its pathway is cofactor biosynthesis; tetrahydrofolate biosynthesis; 5,6,7,8-tetrahydrofolate from 7,8-dihydrofolate: step 1/1. Key enzyme in folate metabolism. Contributes to the de novo mitochondrial thymidylate biosynthesis pathway. Required to prevent uracil accumulation in mtDNA. Binds its own mRNA and that of DHFR. This is Dihydrofolate reductase 2, mitochondrial from Homo sapiens (Human).